We begin with the raw amino-acid sequence, 281 residues long: Cardosin-F (281 aa).

Residues 18-278 enclose the Peptidase A1 domain; that stretch reads YYGEIGIGTP…DYGNLLVGFA (261 aa). The active site involves aspartate 36. Cysteines 181 and 185 form a disulfide. The active site involves aspartate 190. The N-linked (GlcNAc...) asparagine glycan is linked to asparagine 213.

This sequence belongs to the peptidase A1 family. Heterodimer of a light chain and a heavy chain. An intermediate form is produced first, and undergoes proteolytic processing to remove the internal plant-specific insert (PSI) and the propeptide. In terms of processing, N-glycosylated. Pistils.

The protein localises to the microsome membrane. Its subcellular location is the protein storage vacuole. It localises to the secreted. It is found in the cell wall. The protein resides in the extracellular space. The protein localises to the extracellular matrix. With respect to regulation, inhibited by pepstatin. Aspartic protease with a high preference for bonds between hydrophobic residues. This Cynara cardunculus (Cardoon) protein is Cardosin-F.